The sequence spans 474 residues: Coiled-coil domain-containing protein 6 (474 aa).

A compositionally biased stretch (acidic residues) spans 1–10 (MADSASESDT). Positions 1–47 (MADSASESDTDGAGGNSSSSAAMQSSCSSTSGGGGGGGGGGGGGKSG) are disordered. N-acetylalanine is present on A2. The span at 16–30 (NSSSSAAMQSSCSST) shows a compositional bias: low complexity. Residues 31–47 (SGGGGGGGGGGGGGKSG) are compositionally biased toward gly residues. Residue S52 is modified to Phosphoserine. Positions 53–237 (PFRLEELTNR…KRILQEKLDQ (185 aa)) form a coiled coil. A run of 3 repeats spans residues 106–134 (EQEE…AVNY), 135–163 (EKEE…EQHL), and 164–192 (EQEQ…QLTL). The segment at 106–235 (EQEEEFISNT…AEKRILQEKL (130 aa)) is 5 X 29 AA tandem repeats. A 4; approximate repeat occupies 193-206 (EQLRREKIDLENTL). Residues 207 to 235 (EQEQEALVNRLWKRMDKLEAEKRILQEKL) form repeat 5. S240, S244, S249, S254, S284, and S323 each carry phosphoserine. Residues 253 to 332 (DSPENMMRHI…SESESSLEMD (80 aa)) adopt a coiled-coil conformation. Positions 342–369 (AQGLRPRTVSSPIPYTPSPSSSRPISPG) are disordered. At T349 the chain carries Phosphothreonine. The segment covering 351–368 (SSPIPYTPSPSSSRPISP) has biased composition (low complexity). Phosphoserine occurs at positions 363 and 367. R387 bears the Omega-N-methylarginine mark. Phosphoserine is present on residues S395 and S413. The tract at residues 397–474 (GLHVQHMGTS…QHSAHPSSQP (78 aa)) is disordered. Residues 426–451 (PTPPPSPNTQTPVQPPPPPPPPPMQP) show a composition bias toward pro residues. An SH3-binding motif is present at residues 442–451 (PPPPPPPMQP). Positions 459–474 (SQPTPSQHSAHPSSQP) are enriched in low complexity.

In terms of tissue distribution, ubiquitously expressed.

The protein localises to the cytoplasm. It is found in the cytoskeleton. This Homo sapiens (Human) protein is Coiled-coil domain-containing protein 6 (CCDC6).